A 114-amino-acid polypeptide reads, in one-letter code: UPF0145 protein YG5714_0873 (114 aa).

It belongs to the UPF0145 family.

This chain is UPF0145 protein YG5714_0873, found in Saccharolobus islandicus (strain Y.G.57.14 / Yellowstone #1) (Sulfolobus islandicus).